Reading from the N-terminus, the 1141-residue chain is Isoleucine--tRNA ligase, cytoplasmic (1141 aa).

The short motif at 50 to 60 (PFATGLPHYGH) is the 'HIGH' region element. Positions 601–605 (KMSKS) match the 'KMSKS' region motif. ATP is bound at residue Lys-604.

This sequence belongs to the class-I aminoacyl-tRNA synthetase family.

Its subcellular location is the cytoplasm. The enzyme catalyses tRNA(Ile) + L-isoleucine + ATP = L-isoleucyl-tRNA(Ile) + AMP + diphosphate. The protein is Isoleucine--tRNA ligase, cytoplasmic of Caenorhabditis elegans.